The sequence spans 628 residues: Chaperone protein HtpG (628 aa).

The a; substrate-binding stretch occupies residues 1 to 337; the sequence is MSEKKYTFET…SADLPLNVSR (337 aa). A b region spans residues 338 to 554; sequence EILQHNKVID…DYGMSLHMQK (217 aa). Positions 555–628 are c; the sequence is MMEEAGQSFM…FVKLVNKYIR (74 aa).

This sequence belongs to the heat shock protein 90 family. In terms of assembly, homodimer.

The protein localises to the cytoplasm. Its function is as follows. Molecular chaperone. Has ATPase activity. The sequence is that of Chaperone protein HtpG from Francisella tularensis subsp. tularensis (strain WY96-3418).